The chain runs to 390 residues: 8-amino-7-oxononanoate synthase (390 aa).

Substrate is bound at residue Arg19. Residue 106–107 participates in pyridoxal 5'-phosphate binding; it reads GY. His131 contacts substrate. Positions 176, 204, and 233 each coordinate pyridoxal 5'-phosphate. Lys236 carries the N6-(pyridoxal phosphate)lysine modification. Thr350 is a binding site for substrate.

It belongs to the class-II pyridoxal-phosphate-dependent aminotransferase family. BioF subfamily. As to quaternary structure, homodimer. It depends on pyridoxal 5'-phosphate as a cofactor.

The catalysed reaction is 6-carboxyhexanoyl-[ACP] + L-alanine + H(+) = (8S)-8-amino-7-oxononanoate + holo-[ACP] + CO2. It functions in the pathway cofactor biosynthesis; biotin biosynthesis. Catalyzes the decarboxylative condensation of pimeloyl-[acyl-carrier protein] and L-alanine to produce 8-amino-7-oxononanoate (AON), [acyl-carrier protein], and carbon dioxide. In Pseudomonas putida (strain W619), this protein is 8-amino-7-oxononanoate synthase.